The sequence spans 356 residues: Glucose-1-phosphate thymidylyltransferase (356 aa).

Asp-107 and Asp-221 together coordinate Mg(2+).

This sequence belongs to the glucose-1-phosphate thymidylyltransferase family. Mg(2+) serves as cofactor.

It catalyses the reaction dTTP + alpha-D-glucose 1-phosphate + H(+) = dTDP-alpha-D-glucose + diphosphate. Its pathway is antibiotic biosynthesis. Functionally, involved in the biosynthesis of the two 2,6-deoxysugars, dTDP-L-oleandrose and dTDP-D-desosamine, attached to the macrolactone ring oleandolide to produce the aglycone antibiotic oleandomycin. Catalyzes the formation of dTDP-glucose from deoxythymidine triphosphate (dTTP) and glucose 1-phosphate. This Streptomyces antibioticus protein is Glucose-1-phosphate thymidylyltransferase.